We begin with the raw amino-acid sequence, 1425 residues long: Ferlin 1 (1425 aa).

C2 domains lie at 1–123 (MAAK…RQWV), 161–281 (VNEG…PRWF), and 506–629 (TKAG…PVWL). Residues 871 to 952 (RPQASRLSRE…ALAASPEEET (82 aa)) form a disordered region. Basic and acidic residues-rich tracts occupy residues 877 to 889 (LSRE…ERGK) and 912 to 926 (ETEK…KKEG). C2 domains are found at residues 1032–1160 (EMDA…EQMV) and 1192–1319 (RADY…QQHY). A helical membrane pass occupies residues 1404-1424 (TGVWMTVAGIIALVIFVMFLL).

This sequence belongs to the ferlin family.

Its subcellular location is the golgi apparatus. It localises to the trans-Golgi network membrane. The protein resides in the endosome membrane. It is found in the cytoplasm. Functionally, plays a role in microneme replenishment, probably at the vesicular trafficking level. Directs microneme organelle traffic differentially based on microneme population. Regulates microneme secretion: facilitates microneme membrane fusion with the plasma membrane. In Toxoplasma gondii, this protein is Ferlin 1.